The primary structure comprises 576 residues: Arginine--tRNA ligase (576 aa).

Residues 126-136 carry the 'HIGH' region motif; the sequence is ANPTGPMHIGH.

Belongs to the class-I aminoacyl-tRNA synthetase family. In terms of assembly, monomer.

The protein localises to the cytoplasm. The enzyme catalyses tRNA(Arg) + L-arginine + ATP = L-arginyl-tRNA(Arg) + AMP + diphosphate. This Rickettsia africae (strain ESF-5) protein is Arginine--tRNA ligase.